A 124-amino-acid polypeptide reads, in one-letter code: Ribonuclease VapC32 (124 aa).

The 111-residue stretch at 2 to 112 (ILVDTSVWIE…TRDKRLKAAC (111 aa)) folds into the PINc domain. Residues Asp-5 and Asp-86 each coordinate Mg(2+).

It belongs to the PINc/VapC protein family. Mg(2+) serves as cofactor.

Toxic component of a type II toxin-antitoxin (TA) system. An RNase. Its toxic effect is neutralized by coexpression with cognate antitoxin VapB32. This chain is Ribonuclease VapC32, found in Mycobacterium tuberculosis (strain CDC 1551 / Oshkosh).